The chain runs to 202 residues: Energy-coupling factor transporter transmembrane protein BioN (202 aa).

Helical transmembrane passes span 21–40 (LLSLTAFAILLFISHNLLLL), 44–63 (VLVAAVLYGTVGLPIGEALL), and 68–90 (IFLTIAVVALFNLIFNPWQAALV).

This sequence belongs to the CbiQ family. As to quaternary structure, part of a biotin transporter complex composed of BioM, BioN and BioY.

The protein resides in the cell inner membrane. In terms of biological role, involved in biotin uptake. The polypeptide is Energy-coupling factor transporter transmembrane protein BioN (bioN) (Rhizobium etli (strain ATCC 51251 / DSM 11541 / JCM 21823 / NBRC 15573 / CFN 42)).